Consider the following 443-residue polypeptide: Ribulose bisphosphate carboxylase large chain (443 aa).

K3 is subject to N6,N6,N6-trimethyllysine. Substrate-binding residues include N112 and T162. The active-site Proton acceptor is the K164. K166 provides a ligand contact to substrate. Residues K190, D192, and E193 each contribute to the Mg(2+) site. Residue K190 is modified to N6-carboxylysine. The active-site Proton acceptor is the H283. R284, H316, and S368 together coordinate substrate.

It belongs to the RuBisCO large chain family. Type I subfamily. In terms of assembly, heterohexadecamer of 8 large chains and 8 small chains; disulfide-linked. The disulfide link is formed within the large subunit homodimers. Mg(2+) is required as a cofactor. In terms of processing, the disulfide bond which can form in the large chain dimeric partners within the hexadecamer appears to be associated with oxidative stress and protein turnover.

It is found in the plastid. The protein localises to the chloroplast. The enzyme catalyses 2 (2R)-3-phosphoglycerate + 2 H(+) = D-ribulose 1,5-bisphosphate + CO2 + H2O. The catalysed reaction is D-ribulose 1,5-bisphosphate + O2 = 2-phosphoglycolate + (2R)-3-phosphoglycerate + 2 H(+). Functionally, ruBisCO catalyzes two reactions: the carboxylation of D-ribulose 1,5-bisphosphate, the primary event in carbon dioxide fixation, as well as the oxidative fragmentation of the pentose substrate in the photorespiration process. Both reactions occur simultaneously and in competition at the same active site. The sequence is that of Ribulose bisphosphate carboxylase large chain from Iris germanica (Bearded iris).